The sequence spans 566 residues: ALBINO3-like protein 3, mitochondrial (566 aa).

The transit peptide at 1–44 directs the protein to the mitochondrion; the sequence is MAFRRVLLSHLRRSHHTCSSLSPHHVSATTQPSIALALFQSRFF. The next 4 helical transmembrane spans lie at 139–159, 207–227, 249–269, and 301–321; these read WVVIATSTVAFRTALLPILIL, LWVPAYFSIQISCFFLWITSI, LTEIPNGLYGPLFPFLIAGLH, and LLTCALYFLSFQMPQGSLLYW. TPR repeat units lie at residues 386–419, 420–453, 465–498, and 507–540; these read PKELVALSAKYLSGGHKDKSIPLLRLALEKDPEY, LQAMIILGQALYQKDQFAEAAKCLEQAASKLLDT, IVASQWAGVSNIRQGKTSEGITHLERVANMKEPD, and LDALVLYSSAIFNEGRREEAAKYLRRVVAYDPSF. The interval 547 to 566 is disordered; sequence CEEDDTIPTSSSSNSTSKTS. The segment covering 555–566 has biased composition (low complexity); that stretch reads TSSSSNSTSKTS.

The protein belongs to the OXA1/ALB3/YidC (TC 2.A.9.2) family.

The protein resides in the mitochondrion inner membrane. In terms of biological role, probably required for the insertion of integral membrane proteins into the mitochondrial inner membrane. The sequence is that of ALBINO3-like protein 3, mitochondrial (ALB3L3) from Arabidopsis thaliana (Mouse-ear cress).